Reading from the N-terminus, the 264-residue chain is MKQYKDLCRHVLENGEKKGDRTGTGTISTFGYQMRFNLQEGFPMLTTKKLHFKSIAHELLWFLKGDTNVRYLQENGVRIWNEWADENGELGPVYGSQWRSWRGADGETIDQISRLIHDIKTNPNSRRLIVSAWNVGEIDHMALPPCHCLFQFYVADGKLSCQLYQRSADVFLGVPFNIASYALLTMMIAHVTGLEPGEFVHTFGDVHIYQNHVEQVNLQLTRDVRPLPKLRFARNVDSIFDFTFEDFIIEDYDPHPHIKGAVSV.

A dUMP-binding site is contributed by R21. Position 51 (H51) interacts with (6R)-5,10-methylene-5,6,7,8-tetrahydrofolate. Residue R126–R127 participates in dUMP binding. C146 serves as the catalytic Nucleophile. DUMP-binding positions include R166–D169, N177, and H207–Y209. (6R)-5,10-methylene-5,6,7,8-tetrahydrofolate is bound at residue D169. Residue S263 coordinates (6R)-5,10-methylene-5,6,7,8-tetrahydrofolate.

This sequence belongs to the thymidylate synthase family. Bacterial-type ThyA subfamily. Homodimer.

Its subcellular location is the cytoplasm. It catalyses the reaction dUMP + (6R)-5,10-methylene-5,6,7,8-tetrahydrofolate = 7,8-dihydrofolate + dTMP. It functions in the pathway pyrimidine metabolism; dTTP biosynthesis. In terms of biological role, catalyzes the reductive methylation of 2'-deoxyuridine-5'-monophosphate (dUMP) to 2'-deoxythymidine-5'-monophosphate (dTMP) while utilizing 5,10-methylenetetrahydrofolate (mTHF) as the methyl donor and reductant in the reaction, yielding dihydrofolate (DHF) as a by-product. This enzymatic reaction provides an intracellular de novo source of dTMP, an essential precursor for DNA biosynthesis. The chain is Thymidylate synthase from Bacillus velezensis (strain DSM 23117 / BGSC 10A6 / LMG 26770 / FZB42) (Bacillus amyloliquefaciens subsp. plantarum).